The primary structure comprises 199 residues: COMM domain-containing protein 2 (199 aa).

Residues 123 to 190 (SYHNLEWRLD…QALEEMKTNH (68 aa)) enclose the COMM domain.

Belongs to the COMM domain-containing protein 2 family. As to quaternary structure, component of the commander complex consisting of the CCC subcomplex and the retriever subcomplex. Component of the CCC (COMMD/CCDC22/CCDC93) subcomplex consisting of COMMD1, COMMD2, COMMD3, COMMD4, COMMD5, COMMD6, COMMD7, COMMD8, COMMD9, COMMD10, CCDC22 and CCDC93; within the complex forms a heterodimer with COMMD3. Interacts with RELA, RELB, NFKB1/p105, NFKB2/p100. Interacts with CCDC22, CCDC93, SCNN1B, CUL3, CUL4B, CUL5, CUL7. In terms of tissue distribution, ubiquitous.

The protein localises to the cytoplasm. Scaffold protein in the commander complex that is essential for endosomal recycling of transmembrane cargos; the commander complex is composed of the CCC subcomplex and the retriever subcomplex. May modulate activity of cullin-RING E3 ubiquitin ligase (CRL) complexes. May down-regulate activation of NF-kappa-B. The protein is COMM domain-containing protein 2 (COMMD2) of Homo sapiens (Human).